The chain runs to 360 residues: Photosystem II protein D1 3 (360 aa).

Helical transmembrane passes span 29–46, 118–133, and 142–156; these read YVGW…TATI, HFLL…EWEL, and WIAV…AATA. Residue H118 participates in chlorophyll a binding. Residue Y126 participates in pheophytin a binding. Positions 170 and 189 each coordinate [CaMn4O5] cluster. A helical membrane pass occupies residues 197-218; sequence FHMLGVAGVFGGALFSAMHGSL. H198 serves as a coordination point for chlorophyll a. A quinone is bound by residues H215 and 264–265; that span reads SF. Residue H215 coordinates Fe cation. Residue H272 coordinates Fe cation. Residues 274–288 form a helical membrane-spanning segment; sequence FLAAWPVIGIWFASL. [CaMn4O5] cluster is bound by residues H332, E333, D342, and A344. A propeptide spanning residues 345–360 is cleaved from the precursor; sequence AGDQAPVALQAPAING.

This sequence belongs to the reaction center PufL/M/PsbA/D family. In terms of assembly, PSII is composed of 1 copy each of membrane proteins PsbA, PsbB, PsbC, PsbD, PsbE, PsbF, PsbH, PsbI, PsbJ, PsbK, PsbL, PsbM, PsbT, PsbX, PsbY, PsbZ, Psb30/Ycf12, peripheral proteins PsbO, CyanoQ (PsbQ), PsbU, PsbV and a large number of cofactors. It forms dimeric complexes. The cofactor is The D1/D2 heterodimer binds P680, chlorophylls that are the primary electron donor of PSII, and subsequent electron acceptors. It shares a non-heme iron and each subunit binds pheophytin, quinone, additional chlorophylls, carotenoids and lipids. D1 provides most of the ligands for the Mn4-Ca-O5 cluster of the oxygen-evolving complex (OEC). There is also a Cl(-1) ion associated with D1 and D2, which is required for oxygen evolution. The PSII complex binds additional chlorophylls, carotenoids and specific lipids.. Tyr-161 forms a radical intermediate that is referred to as redox-active TyrZ, YZ or Y-Z. Post-translationally, C-terminally processed by CtpA; processing is essential to allow assembly of the oxygen-evolving complex and thus photosynthetic growth.

Its subcellular location is the cellular thylakoid membrane. It catalyses the reaction 2 a plastoquinone + 4 hnu + 2 H2O = 2 a plastoquinol + O2. Its function is as follows. Photosystem II (PSII) is a light-driven water:plastoquinone oxidoreductase that uses light energy to abstract electrons from H(2)O, generating O(2) and a proton gradient subsequently used for ATP formation. It consists of a core antenna complex that captures photons, and an electron transfer chain that converts photonic excitation into a charge separation. The D1/D2 (PsbA/PsbD) reaction center heterodimer binds P680, the primary electron donor of PSII as well as several subsequent electron acceptors. The protein is Photosystem II protein D1 3 of Picosynechococcus sp. (strain ATCC 27264 / PCC 7002 / PR-6) (Agmenellum quadruplicatum).